The following is a 61-amino-acid chain: Photosystem II reaction center protein Z (61 aa).

2 helical membrane passes run 8 to 28 (ALLV…VLFS) and 41 to 61 (LVGS…SFFK).

It belongs to the PsbZ family. PSII is composed of 1 copy each of membrane proteins PsbA, PsbB, PsbC, PsbD, PsbE, PsbF, PsbH, PsbI, PsbJ, PsbK, PsbL, PsbM, PsbT, PsbX, PsbY, PsbZ, Psb30/Ycf12, peripheral proteins PsbO, CyanoQ (PsbQ), PsbU, PsbV and a large number of cofactors. It forms dimeric complexes.

The protein localises to the cellular thylakoid membrane. May control the interaction of photosystem II (PSII) cores with the light-harvesting antenna, regulates electron flow through the 2 photosystem reaction centers. PSII is a light-driven water plastoquinone oxidoreductase, using light energy to abstract electrons from H(2)O, generating a proton gradient subsequently used for ATP formation. This is Photosystem II reaction center protein Z from Synechococcus sp. (strain JA-3-3Ab) (Cyanobacteria bacterium Yellowstone A-Prime).